Reading from the N-terminus, the 215-residue chain is Vesicle-trafficking protein SEC22b (215 aa).

The Cytoplasmic segment spans residues 2 to 194 (VLLTMIARVA…KYLNMRSTYA (193 aa)). One can recognise a Longin domain in the interval 6 to 119 (MIARVADGLP…YSFIEFDTFI (114 aa)). K38 carries the post-translational modification N6-acetyllysine. In terms of domain architecture, v-SNARE coiled-coil homology spans 134-194 (NLGSINTELQ…KYLNMRSTYA (61 aa)). A Phosphoserine modification is found at S137. T140 is subject to Phosphothreonine. 4 positions are modified to phosphoserine: S164, S168, S174, and S177. A helical; Anchor for type IV membrane protein transmembrane segment spans residues 195–215 (KLAAVAVFFIMLIVYVRFWWL).

Belongs to the synaptobrevin family. In terms of assembly, interacts with STX17. Component of two distinct SNARE complexes consisting of STX5, GOSR2/BOS1, BET1 and SEC22B or STX18, USE1L, BNIP1/SEC20L and SEC22B. YKT6 can probably replace SEC22B in either complex. Interacts with the COPII Sec23/24 complex composed of SEC23A and SEC24A; recruits SEC22B into COPII-coated vesicles to allow its transport from the endoplasmic reticulum to the Golgi. Interacts with BET1.

It localises to the endoplasmic reticulum membrane. Its subcellular location is the endoplasmic reticulum-Golgi intermediate compartment membrane. It is found in the golgi apparatus. The protein localises to the cis-Golgi network membrane. The protein resides in the trans-Golgi network membrane. It localises to the melanosome. Its function is as follows. SNARE involved in targeting and fusion of ER-derived transport vesicles with the Golgi complex as well as Golgi-derived retrograde transport vesicles with the ER. The protein is Vesicle-trafficking protein SEC22b (SEC22B) of Homo sapiens (Human).